Here is an 888-residue protein sequence, read N- to C-terminus: MSTSQAEHTRVHPRRRPLKTAPPSLSASTSIESCVADSSSSSPNLSLRKGETFHSPSPPPSDDIDPVLSFRSLPQRSPTCTRSLEAIAAREQRMVDYLSNLNLNSLEPSSPLSDKDNGDDLPVPRAILQAHIDSQSMADRVGRPTQSSELHTPSKVRKTHCHASDSGLGTSLSSENMSASDKSKGIFFYLLNLQPHFLFANMLVIVKAGQLSFESQSSAKATTRMTQSAITSSISAFDAKISQKRQLGLPACKQIERLIIKPILREERLKPFHPLVQSIPQRIVDREIGCLRDLEKTLLWLAPVSDFQKRNGVGCIAHSFSRVLKNYAASRASYLRFCEFTIQCLHTSVYHLNERDQRLPADRPYTNGYFLDLVAQIRRYAAMINESRSSMPSNREPAQNGAKASAPKYVVSPPSRWFARFNIVRSEHITLEGGLSKNGRPAELVVHKDGEMISLRTGKPYEENAVPAMKRSLSLGSVDEGVERSMARRKKNAPPMDINQKCKDCDKVFKRPCDLTKHEKTHSRPWKCTEPSCKYHEIGWPTEKERDRHINDKHSKAPALYKCKFAPCTYSSKRESNCKQHMEKAHGWDYVRSKHNGRNSKKASNGATPQTPSIATPSSKAQGITTPLTGSEPSPFEPVTAYPPNPPFSFADPPTQTGSGDFPLFTTNSPFEDLAAGVNDFSPLPTTSLDFQAFQSQLEGADPNGLIPLTFDRQSFDSGSPVPDLINETMGFDTSPVASTDSSSLNFDLAWSQLDAQNVEEEFTTLTMQMLTPEHSVSMSALNSFSRDPSISNPSPLPVQKVENSLYTPDSCHVDEGVSDLFDSGYQHKADFMLFDQHTNFGASSVNMSSTCQLSALHNSNQMFPSLNTPDLNYMTQGWPQDMEMEHF.

Disordered regions lie at residues 1–78, 132–176, and 388–407; these read MSTS…QRSP, IDSQ…SSEN, and RSSM…ASAP. Polar residues-rich tracts occupy residues 23-32, 167-176, and 388-397; these read PSLSASTSIE, GLGTSLSSEN, and RSSMPSNREP. C2H2-type zinc fingers lie at residues 500–522 and 561–586; these read QKCK…EKTH and YKCK…EKAH. Residues 589–663 form a disordered region; the sequence is DYVRSKHNGR…PTQTGSGDFP (75 aa). The segment covering 602-632 has biased composition (polar residues); that stretch reads KASNGATPQTPSIATPSSKAQGITTPLTGSE.

The protein localises to the nucleus. Functionally, transcription factor that contributes to azole resistance by coregulating the expression of the drug target erg11A and the drug efflux pump mdr1. Binds to the 5'-AGGCA-3' motif in the promoters of ergosterol biosynthesis and drug pump genes to regulate their expression. Is able to interact with the promoters of sltA, sltB, erg11A, erg13A, erg24A, mdr1, abcE and mfsC. Involved in antifungal drug resistance to azoles, terbinafine, and simvastatin but not amphotericin B or caspofungin. This chain is C2H2 zinc finger transcription factor sltA, found in Aspergillus fumigatus (strain CBS 144.89 / FGSC A1163 / CEA10) (Neosartorya fumigata).